The chain runs to 172 residues: MIIYRDLISHDEMFSDIYKIREIADGLCLEVEGKMVSRTEGNIDDSLIGGNASAEGPEGEGTESTVITGVDIVMNHHLQETSFTKEAYKKYIKDYMKSIKGKLEEQRPERVKPFMTGAAEQIKHILANFKNYQFFIGENMNPDGMVALLDYREDGVTPYMIFFKDGLEMEKC.

A TCTP domain is found at 1-172 (MIIYRDLISH…FKDGLEMEKC (172 aa)). The residue at position 46 (S46) is a Phosphoserine; by PLK1. Position 53 is a phosphoserine (S53). Residue S64 is modified to Phosphoserine; by PLK1. Positions 70 to 172 (VDIVMNHHLQ…FKDGLEMEKC (103 aa)) are required for reduction of TSC22D1 protein stability.

This sequence belongs to the TCTP family. In terms of assembly, homodimer. Interacts with STEAP3. Interacts with TSC22D1; interaction results in the destabilization of TSC22D1 protein. As to expression, found in several healthy and tumoral cells including erythrocytes, hepatocytes, macrophages, platelets, keratinocytes, erythroleukemia cells, gliomas, melanomas, hepatoblastomas, and lymphomas. It cannot be detected in kidney and renal cell carcinoma (RCC). Expressed in placenta and prostate.

Its subcellular location is the cytoplasm. Its function is as follows. Involved in calcium binding and microtubule stabilization. Acts as a negative regulator of TSC22D1-mediated apoptosis, via interaction with and destabilization of TSC22D1 protein. In Homo sapiens (Human), this protein is Translationally-controlled tumor protein (TPT1).